We begin with the raw amino-acid sequence, 235 residues long: Matrix protein (235 aa).

It belongs to the nucleorhabdovirus type-2 matrix protein family. As to quaternary structure, homomultimer. Interacts with nucleoprotein and with the cytoplasmic domain of glycoprotein.

Its subcellular location is the virion membrane. The protein resides in the host endomembrane system. Its function is as follows. Plays a major role in assembly and budding of virion. Completely covers the ribonucleoprotein coil and keep it in condensed bullet-shaped form. Inhibits viral transcription and stimulates replication. The sequence is that of Matrix protein (M) from Colocasia esculenta (Wild taro).